We begin with the raw amino-acid sequence, 453 residues long: Ribosome biogenesis protein SSF2 (453 aa).

Positions 1 to 11 are enriched in basic residues; that stretch reads MAKRRQKKRTH. 3 disordered regions span residues 1–22, 275–327, and 373–453; these read MAKR…ERDI, KAKH…KAIK, and AKMR…SEVE. The Brix domain occupies 26 to 348; the sequence is MVIRVGQTSL…LVKIEDGICS (323 aa). Residues 373-398 are compositionally biased toward basic and acidic residues; that stretch reads AKMRLKEQRRKEQEENIAKKKAVKDA. Over residues 399-409 the composition is skewed to basic residues; sequence KKQRKLERRKA. Positions 440–453 are enriched in acidic residues; the sequence is VPEDLDSDLFSEVE.

Part of a complex that includes BRX1, RPF1, RPF2 and SSF1 or SSF2.

Its subcellular location is the nucleus. It is found in the nucleolus. Its function is as follows. Required for biogenesis of the 60S ribosomal subunit. The polypeptide is Ribosome biogenesis protein SSF2 (SSF2) (Saccharomyces cerevisiae (strain ATCC 204508 / S288c) (Baker's yeast)).